A 360-amino-acid chain; its full sequence is Decorin (360 aa).

An N-terminal signal peptide occupies residues 1 to 16; that stretch reads MKATIIFLLVAQVSWA. A propeptide spanning residues 17–30 is cleaved from the precursor; that stretch reads GPFQQKGLFDFMLE. Serine 34 carries O-linked (Xyl...) (glycosaminoglycan) serine glycosylation. 2 cysteine pairs are disulfide-bonded: cysteine 55/cysteine 61 and cysteine 59/cysteine 68. LRR repeat units follow at residues 74–94, 95–118, 119–142, 143–163, 164–187, 188–213, 214–234, 235–258, 259–282, 283–305, 306–335, and 336–360; these read EKVP…NNKI, TEIK…NNKI, SKIS…KNQL, KELP…ENEI, TKVR…TNPL, KSSG…DTNI, TTIP…GNKI, TKVD…FNSI, SAVD…NNKL, VKVP…NNNI, SAIG…SNPV, and QYWE…GNYK. Asparagine 212 is a glycosylation site (N-linked (GlcNAc...) asparagine). N-linked (GlcNAc...) asparagine glycans are attached at residues asparagine 263 and asparagine 304. Residues cysteine 314 and cysteine 347 are joined by a disulfide bond.

This sequence belongs to the small leucine-rich proteoglycan (SLRP) family. SLRP class I subfamily. In terms of assembly, binds to type I and type II collagen, fibronectin and TGF-beta. Forms a ternary complex with MFAP2 and ELN. Interacts with DPT. The attached glycosaminoglycan chain can be either chondroitin 4-sulfate, chondroitin 6-sulfate or dermatan sulfate, depending upon the tissue of origin.

It localises to the secreted. The protein localises to the extracellular space. The protein resides in the extracellular matrix. Its function is as follows. May affect the rate of fibrils formation. The protein is Decorin (DCN) of Bos taurus (Bovine).